We begin with the raw amino-acid sequence, 239 residues long: Sugar fermentation stimulation protein homolog (239 aa).

Belongs to the SfsA family.

The polypeptide is Sugar fermentation stimulation protein homolog (Desulforamulus reducens (strain ATCC BAA-1160 / DSM 100696 / MI-1) (Desulfotomaculum reducens)).